The sequence spans 105 residues: Guanidinium exporter (105 aa).

Residues 1 to 21 (MSWIILVIAGLLEVVWAVGLK) traverse the membrane as a helical segment. At 22–28 (YTHGFSR) the chain is on the cytoplasmic side. Residues 29–49 (LTPSVITVTAMIVSMALLAWA) traverse the membrane as a helical segment. Topologically, residues 50–57 (MKSLPVGT) are periplasmic. A helical transmembrane segment spans residues 58–78 (AYAVWTGIGAVGAAITGIVLL). At 79 to 81 (GES) the chain is on the cytoplasmic side. A helical membrane pass occupies residues 82–102 (ANPMRLASLALIVLGIIGLKL). At 103–105 (STH) the chain is on the periplasmic side.

It belongs to the drug/metabolite transporter (DMT) superfamily. Small multidrug resistance (SMR) (TC 2.A.7.1) family. Gdx/SugE subfamily.

It is found in the cell inner membrane. In terms of biological role, guanidinium ion exporter. Couples guanidinium export to the proton motive force, exchanging one guanidinium ion for two protons. This Escherichia coli O157:H7 protein is Guanidinium exporter.